Here is a 362-residue protein sequence, read N- to C-terminus: Large ribosomal subunit protein uL4A (362 aa).

An N-acetylserine modification is found at Ser2. Arg95 is modified (omega-N-methylarginine). The interval 277-362 (PSHIISTSDV…AVFTETLKHD (86 aa)) is C-terminal-extended nuclear localization signal.

The protein belongs to the universal ribosomal protein uL4 family. Component of the large ribosomal subunit (LSU). Mature yeast ribosomes consist of a small (40S) and a large (60S) subunit. The 40S small subunit contains 1 molecule of ribosomal RNA (18S rRNA) and 33 different proteins (encoded by 57 genes). The large 60S subunit contains 3 rRNA molecules (25S, 5.8S and 5S rRNA) and 46 different proteins (encoded by 81 genes). uL4 is associated with the polypeptide exit tunnel. uL4 interacts with its chaperone ACL4 and the nuclear import receptor KAP104. N-terminally acetylated by acetyltransferase NatA.

It is found in the cytoplasm. Its subcellular location is the nucleus. Functionally, component of the ribosome, a large ribonucleoprotein complex responsible for the synthesis of proteins in the cell. The small ribosomal subunit (SSU) binds messenger RNAs (mRNAs) and translates the encoded message by selecting cognate aminoacyl-transfer RNA (tRNA) molecules. The large subunit (LSU) contains the ribosomal catalytic site termed the peptidyl transferase center (PTC), which catalyzes the formation of peptide bonds, thereby polymerizing the amino acids delivered by tRNAs into a polypeptide chain. The nascent polypeptides leave the ribosome through a tunnel in the LSU and interact with protein factors that function in enzymatic processing, targeting, and the membrane insertion of nascent chains at the exit of the ribosomal tunnel. uL4 participates in the regulation of the accumulation of its own mRNA. In Saccharomyces cerevisiae (strain ATCC 204508 / S288c) (Baker's yeast), this protein is Large ribosomal subunit protein uL4A.